The sequence spans 356 residues: 1-deoxy-D-xylulose 5-phosphate reductoisomerase (356 aa).

The NADPH site is built by Thr-7, Gly-8, Ser-9, Ile-10, Gly-31, Asn-33, and Asn-111. Lys-112 contributes to the 1-deoxy-D-xylulose 5-phosphate binding site. Glu-113 serves as a coordination point for NADPH. Asp-131 contributes to the Mn(2+) binding site. 1-deoxy-D-xylulose 5-phosphate contacts are provided by Ser-132, Glu-133, Ser-155, and His-178. A Mn(2+)-binding site is contributed by Glu-133. NADPH is bound at residue Gly-184. Ser-191, Asn-196, Lys-197, and Glu-200 together coordinate 1-deoxy-D-xylulose 5-phosphate. Glu-200 contacts Mn(2+).

The protein belongs to the DXR family. The cofactor is Mg(2+). Mn(2+) is required as a cofactor.

The catalysed reaction is 2-C-methyl-D-erythritol 4-phosphate + NADP(+) = 1-deoxy-D-xylulose 5-phosphate + NADPH + H(+). It functions in the pathway isoprenoid biosynthesis; isopentenyl diphosphate biosynthesis via DXP pathway; isopentenyl diphosphate from 1-deoxy-D-xylulose 5-phosphate: step 1/6. Catalyzes the NADPH-dependent rearrangement and reduction of 1-deoxy-D-xylulose-5-phosphate (DXP) to 2-C-methyl-D-erythritol 4-phosphate (MEP). The sequence is that of 1-deoxy-D-xylulose 5-phosphate reductoisomerase from Campylobacter jejuni (strain RM1221).